The chain runs to 95 residues: Exodeoxyribonuclease 7 small subunit (95 aa).

It belongs to the XseB family. As to quaternary structure, heterooligomer composed of large and small subunits.

It localises to the cytoplasm. The enzyme catalyses Exonucleolytic cleavage in either 5'- to 3'- or 3'- to 5'-direction to yield nucleoside 5'-phosphates.. Bidirectionally degrades single-stranded DNA into large acid-insoluble oligonucleotides, which are then degraded further into small acid-soluble oligonucleotides. The protein is Exodeoxyribonuclease 7 small subunit of Corynebacterium aurimucosum (strain ATCC 700975 / DSM 44827 / CIP 107346 / CN-1) (Corynebacterium nigricans).